Here is a 305-residue protein sequence, read N- to C-terminus: Glycerol-3-phosphate dehydrogenase [NAD(P)+] (305 aa).

NADPH is bound by residues W11, R31, and K79. Residues K79 and G107 each contribute to the sn-glycerol 3-phosphate site. A111 provides a ligand contact to NADPH. Sn-glycerol 3-phosphate is bound by residues K162, D215, S225, R226, and N227. The active-site Proton acceptor is K162. R226 serves as a coordination point for NADPH. E252 is an NADPH binding site.

Belongs to the NAD-dependent glycerol-3-phosphate dehydrogenase family.

It localises to the cytoplasm. The enzyme catalyses sn-glycerol 3-phosphate + NAD(+) = dihydroxyacetone phosphate + NADH + H(+). It catalyses the reaction sn-glycerol 3-phosphate + NADP(+) = dihydroxyacetone phosphate + NADPH + H(+). It functions in the pathway membrane lipid metabolism; glycerophospholipid metabolism. Its function is as follows. Catalyzes the reduction of the glycolytic intermediate dihydroxyacetone phosphate (DHAP) to sn-glycerol 3-phosphate (G3P), the key precursor for phospholipid synthesis. The chain is Glycerol-3-phosphate dehydrogenase [NAD(P)+] from Gloeobacter violaceus (strain ATCC 29082 / PCC 7421).